The primary structure comprises 515 residues: Cytochrome P450 monooxygenase janP (515 aa).

The chain crosses the membrane as a helical span at residues 20 to 36 (GFLWKYAAFMVFIYLLL). Cys-456 contributes to the heme binding site. Asn-501 carries an N-linked (GlcNAc...) asparagine glycan.

Belongs to the cytochrome P450 family. Heme serves as cofactor.

The protein localises to the membrane. Its pathway is secondary metabolite biosynthesis. Cytochrome P450 monooxygenase; part of the gene cluster that mediates the biosynthesis of the indole diterpenes janthitremanes such as shearinine K or shearinine A. The geranylgeranyl diphosphate (GGPP) synthase janG catalyzes the first step in janthitremane biosynthesis via conversion of farnesyl pyrophosphate and isopentyl pyrophosphate into geranylgeranyl pyrophosphate (GGPP). Condensation of indole-3-glycerol phosphate with GGPP by the prenyl transferase janC then forms 3-geranylgeranylindole (3-GGI). Epoxidation by the FAD-dependent monooxygenase janM leads to a epoxidized-GGI that is substrate of the terpene cyclase janB for cyclization to yield paspaline. Paspaline is subsequently converted to 13-desoxypaspaline by the cytochrome P450 monooxygenase janP, via beta-PC-M6 in a series of alpha-face oxidations. The cytochrome P450 monooxygenase janQ is proposed to carry out sequential beta-face oxidation steps at C-7 and C-13 of 13-desoxypaspaline to form paspalicine and paspalinine respectively. The indole diterpene prenyltransferase janD may then convert paspalinine into shearinine K which is substrate of janO and/or additional enzymes for oxidation and cyclization to generate shearinine A. The protein is Cytochrome P450 monooxygenase janP of Penicillium janthinellum (Penicillium vitale).